A 184-amino-acid chain; its full sequence is uncharacterized protein (184 aa).

A Nudix hydrolase domain is found at L36–L164. The Nudix box motif lies at G73 to G95. Positions 89 and 93 each coordinate Mg(2+).

The protein belongs to the Nudix hydrolase family. Requires Mg(2+) as cofactor.

This is an uncharacterized protein from Salmonella typhi.